The chain runs to 216 residues: Pyridoxine/pyridoxamine 5'-phosphate oxidase 1 (216 aa).

Substrate contacts are provided by residues 10–13 (RREY) and lysine 68. Residues 63 to 68 (RIVLLK), 78 to 79 (YT), lysine 85, and glutamine 107 contribute to the FMN site. Tyrosine 125, arginine 129, and serine 133 together coordinate substrate. FMN is bound by residues 142-143 (QS) and tryptophan 186. 192–194 (RLH) is a substrate binding site. Residue arginine 196 participates in FMN binding.

Belongs to the pyridoxamine 5'-phosphate oxidase family. As to quaternary structure, homodimer. FMN serves as cofactor.

The enzyme catalyses pyridoxamine 5'-phosphate + O2 + H2O = pyridoxal 5'-phosphate + H2O2 + NH4(+). It carries out the reaction pyridoxine 5'-phosphate + O2 = pyridoxal 5'-phosphate + H2O2. Its pathway is cofactor metabolism; pyridoxal 5'-phosphate salvage; pyridoxal 5'-phosphate from pyridoxamine 5'-phosphate: step 1/1. It participates in cofactor metabolism; pyridoxal 5'-phosphate salvage; pyridoxal 5'-phosphate from pyridoxine 5'-phosphate: step 1/1. Functionally, catalyzes the oxidation of either pyridoxine 5'-phosphate (PNP) or pyridoxamine 5'-phosphate (PMP) into pyridoxal 5'-phosphate (PLP). In Hydrogenovibrio crunogenus (strain DSM 25203 / XCL-2) (Thiomicrospira crunogena), this protein is Pyridoxine/pyridoxamine 5'-phosphate oxidase 1.